The chain runs to 129 residues: M-zodatoxin-Lt8c (129 aa).

The first 20 residues, 1-20 (MKYFVVALALVAAFACIAES), serve as a signal peptide directing secretion. Residues 21–60 (KPAESEHELAEVEEENELADLEDAVWLEHLADLSDLEEAR) constitute a propeptide that is removed on maturation. The Processing quadruplet motif signature appears at 57–60 (EEAR).

In terms of processing, cleavage of the propeptide depends on the processing quadruplet motif (XXXR, with at least one of X being E). In terms of tissue distribution, expressed by the venom gland.

The protein localises to the secreted. In terms of biological role, insecticidal, cytolytic and antimicrobial peptide. Forms voltage-dependent, ion-permeable channels in membranes. At high concentration causes cell membrane lysis. The chain is M-zodatoxin-Lt8c (cit 1-3) from Lachesana tarabaevi (Spider).